The chain runs to 284 residues: Cell wall mannoprotein 1 (284 aa).

The N-terminal stretch at 1–17 (MRFSALLVTLGLTGALA) is a signal peptide. Positions 176–234 (SSTGTASSSAPATETATATETSTATGTVTETATSTPVIPTGTASGSASATPSTTATPTT) are enriched in low complexity. A disordered region spans residues 176-252 (SSTGTASSSA…SSTGTATAST (77 aa)).

This sequence belongs to the cell wall mannoprotein 1 family. In terms of processing, galactomannoprotein, glycosylated.

It localises to the secreted. It is found in the cell wall. Constitutive protein of the cell wall. Antigen target of host humoral immune response. The protein is Cell wall mannoprotein 1 of Aspergillus fumigatus (Neosartorya fumigata).